The chain runs to 336 residues: Protein-glutamate methylesterase/protein-glutamine glutaminase 3 (336 aa).

Positions 2-119 (KIAIVNDMPM…PNPKEAAAPL (118 aa)) constitute a Response regulatory domain. 4-aspartylphosphate is present on D53. A CheB-type methylesterase domain is found at 147–336 (PARRDRLVAI…APRLVEVFTQ (190 aa)). Catalysis depends on residues S159, H186, and D279.

The protein belongs to the CheB family. Phosphorylated by CheA. Phosphorylation of the N-terminal regulatory domain activates the methylesterase activity.

It localises to the cytoplasm. It carries out the reaction [protein]-L-glutamate 5-O-methyl ester + H2O = L-glutamyl-[protein] + methanol + H(+). The enzyme catalyses L-glutaminyl-[protein] + H2O = L-glutamyl-[protein] + NH4(+). In terms of biological role, involved in chemotaxis. Part of a chemotaxis signal transduction system that modulates chemotaxis in response to various stimuli. Catalyzes the demethylation of specific methylglutamate residues introduced into the chemoreceptors (methyl-accepting chemotaxis proteins or MCP) by CheR. Also mediates the irreversible deamidation of specific glutamine residues to glutamic acid. The polypeptide is Protein-glutamate methylesterase/protein-glutamine glutaminase 3 (Pseudomonas savastanoi pv. phaseolicola (strain 1448A / Race 6) (Pseudomonas syringae pv. phaseolicola (strain 1448A / Race 6))).